The primary structure comprises 140 residues: N14 matrix protein (140 aa).

A signal peptide spans 1-25 (MACTLRLTIAALVLLGICHLSRPVA).

This sequence belongs to the N16 matrix protein family. As to quaternary structure, heterooligomer; disulfide-linked. Pif97, Pif80, N16 and other proteins form a complex. Component of conchiolin, the organic matrix of nacre. Only expressed in the dorsal region of the mantle.

Its subcellular location is the secreted. The protein localises to the extracellular space. It is found in the extracellular matrix. May be specifically involved in the formation of the nacreous layer. In Pinctada maxima (Silver-lipped pearl oyster), this protein is N14 matrix protein.